A 210-amino-acid chain; its full sequence is Large ribosomal subunit protein uL4 (210 aa).

The segment at 46-89 is disordered; it reads QGTASTLTRSEVRGGGRKPYKQKGTGRARQGSIRTPLRPGGGII. Residues 60–71 are compositionally biased toward basic residues; sequence GGRKPYKQKGTG.

This sequence belongs to the universal ribosomal protein uL4 family. In terms of assembly, part of the 50S ribosomal subunit.

One of the primary rRNA binding proteins, this protein initially binds near the 5'-end of the 23S rRNA. It is important during the early stages of 50S assembly. It makes multiple contacts with different domains of the 23S rRNA in the assembled 50S subunit and ribosome. In terms of biological role, forms part of the polypeptide exit tunnel. The chain is Large ribosomal subunit protein uL4 from Prochlorococcus marinus (strain MIT 9215).